The chain runs to 271 residues: Aliphatic sulfonates import ATP-binding protein SsuB (271 aa).

The region spanning 13–234 is the ABC transporter domain; the sequence is ITLESIGKRY…RKGSAKLAAL (222 aa). ATP is bound at residue 45-52; it reads GRSGCGKS. The interval 250-271 is disordered; sequence EASRQGIKASRQGTATSRRVAN. Polar residues predominate over residues 260-271; sequence RQGTATSRRVAN.

Belongs to the ABC transporter superfamily. Aliphatic sulfonates importer (TC 3.A.1.17.2) family. In terms of assembly, the complex is composed of two ATP-binding proteins (SsuB), two transmembrane proteins (SsuC) and a solute-binding protein (SsuA).

It is found in the cell inner membrane. The catalysed reaction is ATP + H2O + aliphatic sulfonate-[sulfonate-binding protein]Side 1 = ADP + phosphate + aliphatic sulfonateSide 2 + [sulfonate-binding protein]Side 1.. In terms of biological role, part of the ABC transporter complex SsuABC involved in aliphatic sulfonates import. Responsible for energy coupling to the transport system. The chain is Aliphatic sulfonates import ATP-binding protein SsuB from Yersinia pestis bv. Antiqua (strain Antiqua).